The primary structure comprises 432 residues: Trigger factor (432 aa).

A PPIase FKBP-type domain is found at 161 to 246 (DDRVTIDFVG…LKKIENMVLP (86 aa)).

This sequence belongs to the FKBP-type PPIase family. Tig subfamily.

The protein localises to the cytoplasm. It catalyses the reaction [protein]-peptidylproline (omega=180) = [protein]-peptidylproline (omega=0). Functionally, involved in protein export. Acts as a chaperone by maintaining the newly synthesized protein in an open conformation. Functions as a peptidyl-prolyl cis-trans isomerase. The chain is Trigger factor (tig) from Haemophilus influenzae (strain ATCC 51907 / DSM 11121 / KW20 / Rd).